A 75-amino-acid polypeptide reads, in one-letter code: UPF0346 protein LJ_1103 (75 aa).

Belongs to the UPF0346 family.

The sequence is that of UPF0346 protein LJ_1103 from Lactobacillus johnsonii (strain CNCM I-12250 / La1 / NCC 533).